The chain runs to 488 residues: Putative BTB/POZ domain-containing protein L674 (488 aa).

A BTB domain is found at 83–150 (NIVYFNIGGK…VKNQKCPINN (68 aa)).

The protein belongs to the mimivirus BTB/WD family.

The chain is Putative BTB/POZ domain-containing protein L674 from Acanthamoeba polyphaga (Amoeba).